A 76-amino-acid polypeptide reads, in one-letter code: UPF0346 protein OEOE_1017 (76 aa).

It belongs to the UPF0346 family.

This is UPF0346 protein OEOE_1017 from Oenococcus oeni (strain ATCC BAA-331 / PSU-1).